The chain runs to 644 residues: Translation factor GUF1, mitochondrial (644 aa).

The transit peptide at 1–14 (MLRKAFRYLVPVRC) directs the protein to the mitochondrion. The tr-type G domain maps to 46–227 (ERYRNFSIVA…AIVDRIPPPT (182 aa)). GTP contacts are provided by residues 55 to 62 (AHVDHGKS), 120 to 124 (DTPGH), and 174 to 177 (NKID).

The protein belongs to the TRAFAC class translation factor GTPase superfamily. Classic translation factor GTPase family. LepA subfamily.

Its subcellular location is the mitochondrion inner membrane. The enzyme catalyses GTP + H2O = GDP + phosphate + H(+). Functionally, promotes mitochondrial protein synthesis. May act as a fidelity factor of the translation reaction, by catalyzing a one-codon backward translocation of tRNAs on improperly translocated ribosomes. Binds to mitochondrial ribosomes in a GTP-dependent manner. The sequence is that of Translation factor GUF1, mitochondrial from Eremothecium gossypii (strain ATCC 10895 / CBS 109.51 / FGSC 9923 / NRRL Y-1056) (Yeast).